The primary structure comprises 370 residues: Aminomethyltransferase (370 aa).

It belongs to the GcvT family. As to quaternary structure, the glycine cleavage system is composed of four proteins: P, T, L and H.

The enzyme catalyses N(6)-[(R)-S(8)-aminomethyldihydrolipoyl]-L-lysyl-[protein] + (6S)-5,6,7,8-tetrahydrofolate = N(6)-[(R)-dihydrolipoyl]-L-lysyl-[protein] + (6R)-5,10-methylene-5,6,7,8-tetrahydrofolate + NH4(+). The glycine cleavage system catalyzes the degradation of glycine. This is Aminomethyltransferase from Clostridium botulinum (strain 657 / Type Ba4).